A 547-amino-acid polypeptide reads, in one-letter code: GID complex substrate-recognition subunit 10 (547 aa).

Composition is skewed to polar residues over residues 1 to 11 (MPRSLDNFQNE) and 28 to 41 (GFPN…SNSQ). 4 disordered regions span residues 1-42 (MPRS…NSQR), 60-115 (EQDS…SNAT), 169-217 (RNSS…NPQS), and 285-313 (PAVL…QTPN). Basic residues predominate over residues 99–108 (SASRQRRRSG). Positions 169-185 (RNSSTFGSNPNSVFSAQ) are enriched in polar residues. Low complexity-rich tracts occupy residues 186–199 (PTEP…SSFP), 207–217 (SRSISISNPQS), and 298–307 (SSSSASSYGS).

The protein belongs to the GID4/VID24 family. In terms of assembly, substrate-recognition component of the GID/CTLH complex. In the absence of stress, the complex exists as an inactive anticipatory complex (GID(Ant)), composed of Gid1, the E3 ubiquitin-ligase Gid2, Gid5, Gid8, and the RING-like subunit Gid9, awaiting a substrate receptor to form the active E3 ligase complex. When cells are shifted to glucose-containing medium, the substrate receptor Gid4 is induced and becomes part of the complex, named GID(SR4). Additionally, Gid7 transforms the GID(SR4) E3 ligase core into a higher-order supramolecular assembly (Chelator-GID(SR4)). Under osmotic or heat stress, the substrate receptor Gid10 is induced and becomes part of the complex, named GID(SR10). Interacts with proteins that have an N-terminal Pro/N-degron.

The protein resides in the nucleus. In terms of biological role, substrate-recognition component of the GID E3 ligase complex recruiting N termini and catalyzing ubiquitination of proteins targeted for degradation. GID E3 is regulated through assembly with interchangeable N-degron-binding substrate receptors induced by distinct environmental perturbations. Required for the adaptation to osmotic or heat stress. Specific for substrates with an N-terminal Pro (Pro/N-degron). The polypeptide is GID complex substrate-recognition subunit 10 (gid10) (Schizosaccharomyces pombe (strain 972 / ATCC 24843) (Fission yeast)).